The following is a 318-amino-acid chain: NADH-ubiquinone oxidoreductase chain 1 (318 aa).

The next 8 helical transmembrane spans lie at 2–22 (PMIN…FLML), 69–89 (ALYI…WTPL), 100–120 (LGLL…LWSG), 147–167 (AIIL…TLIT), 171–191 (HIWL…STLA), 222–242 (LFFM…TMIF), 253–273 (ELYT…FLWI), and 294–314 (LPLT…IASI).

It belongs to the complex I subunit 1 family. Core subunit of respiratory chain NADH dehydrogenase (Complex I) which is composed of 45 different subunits.

The protein localises to the mitochondrion inner membrane. It catalyses the reaction a ubiquinone + NADH + 5 H(+)(in) = a ubiquinol + NAD(+) + 4 H(+)(out). Functionally, core subunit of the mitochondrial membrane respiratory chain NADH dehydrogenase (Complex I) which catalyzes electron transfer from NADH through the respiratory chain, using ubiquinone as an electron acceptor. Essential for the catalytic activity and assembly of complex I. This chain is NADH-ubiquinone oxidoreductase chain 1 (MT-ND1), found in Hylobates lar (Lar gibbon).